The sequence spans 184 residues: Large ribosomal subunit protein uL6 (184 aa).

It belongs to the universal ribosomal protein uL6 family. Part of the 50S ribosomal subunit.

This protein binds to the 23S rRNA, and is important in its secondary structure. It is located near the subunit interface in the base of the L7/L12 stalk, and near the tRNA binding site of the peptidyltransferase center. The chain is Large ribosomal subunit protein uL6 from Thermococcus onnurineus (strain NA1).